The primary structure comprises 1393 residues: DNA-directed RNA polymerase subunit beta' (1393 aa).

The Zn(2+) site is built by Cys-71, Cys-73, Cys-86, and Cys-89. Asp-462, Asp-464, and Asp-466 together coordinate Mg(2+). Zn(2+) contacts are provided by Cys-811, Cys-885, Cys-892, and Cys-895.

This sequence belongs to the RNA polymerase beta' chain family. As to quaternary structure, the RNAP catalytic core consists of 2 alpha, 1 beta, 1 beta' and 1 omega subunit. When a sigma factor is associated with the core the holoenzyme is formed, which can initiate transcription. Mg(2+) is required as a cofactor. The cofactor is Zn(2+).

The catalysed reaction is RNA(n) + a ribonucleoside 5'-triphosphate = RNA(n+1) + diphosphate. DNA-dependent RNA polymerase catalyzes the transcription of DNA into RNA using the four ribonucleoside triphosphates as substrates. The chain is DNA-directed RNA polymerase subunit beta' from Azorhizobium caulinodans (strain ATCC 43989 / DSM 5975 / JCM 20966 / LMG 6465 / NBRC 14845 / NCIMB 13405 / ORS 571).